The following is a 184-amino-acid chain: Large ribosomal subunit protein uL6 (184 aa).

It belongs to the universal ribosomal protein uL6 family. In terms of assembly, part of the 50S ribosomal subunit.

This protein binds to the 23S rRNA, and is important in its secondary structure. It is located near the subunit interface in the base of the L7/L12 stalk, and near the tRNA binding site of the peptidyltransferase center. The chain is Large ribosomal subunit protein uL6 from Salinibacter ruber (strain DSM 13855 / M31).